The chain runs to 662 residues: DNA ligase (662 aa).

NAD(+) contacts are provided by residues 31-35 (DSEYD), 79-80 (SL), and glutamate 119. The active-site N6-AMP-lysine intermediate is lysine 121. Residues arginine 142, glutamate 176, lysine 288, and lysine 312 each coordinate NAD(+). Zn(2+) contacts are provided by cysteine 405, cysteine 408, cysteine 421, and cysteine 427. Residues 583–662 (NIEKKLDNLT…DELNSFLDNL (80 aa)) form the BRCT domain.

It belongs to the NAD-dependent DNA ligase family. LigA subfamily. Mg(2+) is required as a cofactor. It depends on Mn(2+) as a cofactor.

It carries out the reaction NAD(+) + (deoxyribonucleotide)n-3'-hydroxyl + 5'-phospho-(deoxyribonucleotide)m = (deoxyribonucleotide)n+m + AMP + beta-nicotinamide D-nucleotide.. Its function is as follows. DNA ligase that catalyzes the formation of phosphodiester linkages between 5'-phosphoryl and 3'-hydroxyl groups in double-stranded DNA using NAD as a coenzyme and as the energy source for the reaction. It is essential for DNA replication and repair of damaged DNA. In Finegoldia magna (strain ATCC 29328 / DSM 20472 / WAL 2508) (Peptostreptococcus magnus), this protein is DNA ligase.